The following is a 126-amino-acid chain: Outer membrane lipoprotein omp10 (126 aa).

Residues 1-19 (MKRFRIVAPLALMSLALAA) form the signal peptide. Cysteine 20 carries N-palmitoyl cysteine lipidation. Cysteine 20 is lipidated: S-diacylglycerol cysteine.

This sequence belongs to the rhizobiaceae omp10 lipoprotein family.

It is found in the cell outer membrane. This is Outer membrane lipoprotein omp10 (omp10) from Brucella abortus biovar 1 (strain 9-941).